Reading from the N-terminus, the 227-residue chain is Cytochrome c oxidase subunit 2 (227 aa).

The Mitochondrial intermembrane portion of the chain corresponds to 1–14 (MAHPAQLGLQDATS). The chain crosses the membrane as a helical span at residues 15 to 45 (PVMEELITFHDHALMAMSLISLLVLYALFST). Residues 46–59 (LTTKMTNTNITDAQ) are Mitochondrial matrix-facing. The chain crosses the membrane as a helical span at residues 60 to 87 (EMETIWTILPAIILVLIAFPSLRILYMT). Over 88 to 227 (DEVNNPSFTI…IFEMGPVFTL (140 aa)) the chain is Mitochondrial intermembrane. Cu cation is bound by residues His161, Cys196, Glu198, Cys200, His204, and Met207. Glu198 is a binding site for Mg(2+).

The protein belongs to the cytochrome c oxidase subunit 2 family. Component of the cytochrome c oxidase (complex IV, CIV), a multisubunit enzyme composed of 14 subunits. The complex is composed of a catalytic core of 3 subunits MT-CO1, MT-CO2 and MT-CO3, encoded in the mitochondrial DNA, and 11 supernumerary subunits COX4I, COX5A, COX5B, COX6A, COX6B, COX6C, COX7A, COX7B, COX7C, COX8 and NDUFA4, which are encoded in the nuclear genome. The complex exists as a monomer or a dimer and forms supercomplexes (SCs) in the inner mitochondrial membrane with NADH-ubiquinone oxidoreductase (complex I, CI) and ubiquinol-cytochrome c oxidoreductase (cytochrome b-c1 complex, complex III, CIII), resulting in different assemblies (supercomplex SCI(1)III(2)IV(1) and megacomplex MCI(2)III(2)IV(2)). Found in a complex with TMEM177, COA6, COX18, COX20, SCO1 and SCO2. Interacts with TMEM177 in a COX20-dependent manner. Interacts with COX20. Interacts with COX16. Requires Cu cation as cofactor.

It localises to the mitochondrion inner membrane. It catalyses the reaction 4 Fe(II)-[cytochrome c] + O2 + 8 H(+)(in) = 4 Fe(III)-[cytochrome c] + 2 H2O + 4 H(+)(out). In terms of biological role, component of the cytochrome c oxidase, the last enzyme in the mitochondrial electron transport chain which drives oxidative phosphorylation. The respiratory chain contains 3 multisubunit complexes succinate dehydrogenase (complex II, CII), ubiquinol-cytochrome c oxidoreductase (cytochrome b-c1 complex, complex III, CIII) and cytochrome c oxidase (complex IV, CIV), that cooperate to transfer electrons derived from NADH and succinate to molecular oxygen, creating an electrochemical gradient over the inner membrane that drives transmembrane transport and the ATP synthase. Cytochrome c oxidase is the component of the respiratory chain that catalyzes the reduction of oxygen to water. Electrons originating from reduced cytochrome c in the intermembrane space (IMS) are transferred via the dinuclear copper A center (CU(A)) of subunit 2 and heme A of subunit 1 to the active site in subunit 1, a binuclear center (BNC) formed by heme A3 and copper B (CU(B)). The BNC reduces molecular oxygen to 2 water molecules using 4 electrons from cytochrome c in the IMS and 4 protons from the mitochondrial matrix. The chain is Cytochrome c oxidase subunit 2 (MT-CO2) from Mandrillus leucophaeus (Drill).